The following is a 326-amino-acid chain: Small ribosomal subunit protein RACK1x (326 aa).

7 WD repeats span residues 13–53 (AHTD…KSYG), 61–100 (GHSHFVEDVVLSSDGQFALSGSWDGELRLWDLATGETTRR), 103–142 (GHTKDVLSVAFSTDNRQIVSASRDRTIKLWNTLGECKYTI), 147–188 (GHKE…LRNS), 191–230 (GHSGYLNTVAVSPDGSLCASGGKDGVILLWDLAEGKKLYS), 232–270 (EAGSIIHSLCFSPNRYWLCAATENSIRIWDLESKSVVED), and 290–326 (NQKKVIYCTSLNWSADGSTLFSGYTDGVVRVWGIGRY).

The protein belongs to the WD repeat G protein beta family. Ribosomal protein RACK1 subfamily. In terms of assembly, homodimer and heterodimer with RACK1A or RACK1B. Interacts with GB1, MEKK1, MKK4, MKK5, MPK3 and MPK6, but not with GPA1 or MPK4. In terms of tissue distribution, widely expressed.

Its function is as follows. Minor component of the RACK1 regulatory proteins that play a role in multiple signal transduction pathways. Involved in multiple hormone responses and developmental processes. MAPK cascade scaffolding protein involved in the protease IV and ArgC signaling pathway but not the flg22 pathway. The protein is Small ribosomal subunit protein RACK1x of Arabidopsis thaliana (Mouse-ear cress).